Here is a 74-residue protein sequence, read N- to C-terminus: High-potential iron-sulfur protein (74 aa).

[4Fe-4S] cluster contacts are provided by Cys36, Cys39, Cys53, and Cys67.

This sequence belongs to the high-potential iron-sulfur protein (HiPIP) family. In terms of assembly, homodimer.

In terms of biological role, specific class of high-redox-potential 4Fe-4S ferredoxins. Functions in anaerobic electron transport in most purple and in some other photosynthetic bacteria and in at least one genus (Paracoccus) of halophilic, denitrifying bacteria. This Rubrivivax gelatinosus (Rhodocyclus gelatinosus) protein is High-potential iron-sulfur protein (hip).